Reading from the N-terminus, the 690-residue chain is Glycine--tRNA ligase beta subunit (690 aa).

This sequence belongs to the class-II aminoacyl-tRNA synthetase family. As to quaternary structure, tetramer of two alpha and two beta subunits.

The protein resides in the cytoplasm. The enzyme catalyses tRNA(Gly) + glycine + ATP = glycyl-tRNA(Gly) + AMP + diphosphate. The polypeptide is Glycine--tRNA ligase beta subunit (Buchnera aphidicola subsp. Acyrthosiphon pisum (strain Tuc7)).